We begin with the raw amino-acid sequence, 375 residues long: tRNA-specific 2-thiouridylase MnmA (375 aa).

ATP is bound by residues 12–19 and M38; that span reads GMSGGVDS. The tract at residues 98–100 is interaction with target base in tRNA; it reads NPD. C103 serves as the catalytic Nucleophile. Cysteines 103 and 200 form a disulfide. G127 contributes to the ATP binding site. An interaction with tRNA region spans residues 150-152; that stretch reads KDQ. The active-site Cysteine persulfide intermediate is C200. Positions 312-313 are interaction with tRNA; the sequence is RY.

This sequence belongs to the MnmA/TRMU family.

It is found in the cytoplasm. It carries out the reaction S-sulfanyl-L-cysteinyl-[protein] + uridine(34) in tRNA + AH2 + ATP = 2-thiouridine(34) in tRNA + L-cysteinyl-[protein] + A + AMP + diphosphate + H(+). In terms of biological role, catalyzes the 2-thiolation of uridine at the wobble position (U34) of tRNA, leading to the formation of s(2)U34. The chain is tRNA-specific 2-thiouridylase MnmA from Lactobacillus delbrueckii subsp. bulgaricus (strain ATCC 11842 / DSM 20081 / BCRC 10696 / JCM 1002 / NBRC 13953 / NCIMB 11778 / NCTC 12712 / WDCM 00102 / Lb 14).